The chain runs to 293 residues: MPSLKDVKVKIAGVKKTKQITKAMNMVASAKLRGAQQRIERFRPYAAKFYDMLGDLASKADSSVHPLLEVREEIKTCGIVLATSDRGLCGSFNSNLITTALKLAAKKAAEGKKVKFYCVGKKGRDAARKTDHEVAMALADQMGSFDFQLANRIGLDVINAYLARELDEVIMVYGEFVSMAKQLPIALPILPIAPKEEEAAPAAPASNKEYIYEPAVEGLLAELLPRFIKVQLYRGLLDTSASEHAARMAAMDNATRSCDDMIGSLTLLFNKTRQASITRDLMDIVGGAEALKG.

It belongs to the ATPase gamma chain family. In terms of assembly, F-type ATPases have 2 components, CF(1) - the catalytic core - and CF(0) - the membrane proton channel. CF(1) has five subunits: alpha(3), beta(3), gamma(1), delta(1), epsilon(1). CF(0) has three main subunits: a, b and c.

Its subcellular location is the cell inner membrane. In terms of biological role, produces ATP from ADP in the presence of a proton gradient across the membrane. The gamma chain is believed to be important in regulating ATPase activity and the flow of protons through the CF(0) complex. This Nitratidesulfovibrio vulgaris (strain DSM 19637 / Miyazaki F) (Desulfovibrio vulgaris) protein is ATP synthase gamma chain.